Here is a 439-residue protein sequence, read N- to C-terminus: Magnesium-dependent glutamate N-prenyltransferase (439 aa).

Mg(2+) contacts are provided by Asn-322, Thr-326, Glu-330, and Phe-337.

This sequence belongs to the terpene synthase family. Mg(2+) serves as cofactor.

It carries out the reaction dimethylallyl diphosphate + L-glutamate = prekainate + diphosphate. It functions in the pathway secondary metabolite biosynthesis. Its function is as follows. Magnesium-dependent glutamate N-prenyltransferase: part of the gene cluster that mediates the biosynthesis of kainic acid (KA) and derivatives, natural products with neurochemical activity acting as ionotropic glutamate receptor (iGluR) agonists, thus being neurotoxins. Catalyzes the conversion of L-glutamic acid (L-Glu) to prekainic acid in the presence of dimethylallyl diphosphate (DMAPP). Can also use geranyl diphosphate (GPP) as substrate, thus leading to the formation of N-geranyl-L-glutamic acid (L-NGG). This Digenea simplex (Marine red alga) protein is Magnesium-dependent glutamate N-prenyltransferase.